The sequence spans 259 residues: Hydroxyethylthiazole kinase (259 aa).

A substrate-binding site is contributed by Met-37. ATP is bound by residues Arg-113 and Thr-158. Substrate is bound at residue Gly-185.

Belongs to the Thz kinase family. Requires Mg(2+) as cofactor.

The catalysed reaction is 5-(2-hydroxyethyl)-4-methylthiazole + ATP = 4-methyl-5-(2-phosphooxyethyl)-thiazole + ADP + H(+). The protein operates within cofactor biosynthesis; thiamine diphosphate biosynthesis; 4-methyl-5-(2-phosphoethyl)-thiazole from 5-(2-hydroxyethyl)-4-methylthiazole: step 1/1. In terms of biological role, catalyzes the phosphorylation of the hydroxyl group of 4-methyl-5-beta-hydroxyethylthiazole (THZ). In Helicobacter pylori (strain Shi470), this protein is Hydroxyethylthiazole kinase.